Reading from the N-terminus, the 456-residue chain is Chordin-like protein 1 (456 aa).

A signal peptide spans 1-28; sequence MRRKWRSEDFHFVFFGVLCLLLIDRGKL. 3 consecutive VWFC domains span residues 36–101, 115–181, and 262–327; these read TYCV…PRCP, KSCE…PVCR, and RVCV…KVCP. N120 carries N-linked (GlcNAc...) asparagine glycosylation. The Cell attachment site motif lies at 181–183; the sequence is RGD. N295 carries an N-linked (GlcNAc...) asparagine glycan.

As to expression, mainly expressed in the ventral retina.

It localises to the secreted. Functionally, seems to antagonize the function of BMP4 by binding to it and preventing its interaction with receptors. The polypeptide is Chordin-like protein 1 (CHRDL1) (Gallus gallus (Chicken)).